A 1434-amino-acid chain; its full sequence is DNA-directed RNA polymerase subunit beta (1434 aa).

The protein belongs to the RNA polymerase beta chain family. As to quaternary structure, the RNAP catalytic core consists of 2 alpha, 1 beta, 1 beta' and 1 omega subunit. When a sigma factor is associated with the core the holoenzyme is formed, which can initiate transcription.

The enzyme catalyses RNA(n) + a ribonucleoside 5'-triphosphate = RNA(n+1) + diphosphate. In terms of biological role, DNA-dependent RNA polymerase catalyzes the transcription of DNA into RNA using the four ribonucleoside triphosphates as substrates. This is DNA-directed RNA polymerase subunit beta from Ureaplasma urealyticum serovar 10 (strain ATCC 33699 / Western).